Here is a 579-residue protein sequence, read N- to C-terminus: MNHPSLPPQSERRALAIAQAVYEAFEDYHARFSEITACAKQRFETRDWSGAREDAVARIALYDQYIAECMLRLRAVLLGQAHDRALWMRARDRYAALLSGLIDQELYKTFYNTLTRRYFGTHGVDADIEFIALDIEPTDAITVPVARHTYAVSPGRLTDMLVRVLGDYAFAVPYAHRTRCAAAIAVRLLDDLAHWGEHPVRSVELLETVFYRERRAYLVGRVFGEHRFSPCVIALINDDAGLRAEAVLTRRSDVAQLFSNSRSYFQADLSTVGDAVVFLRSLLTHKPVDELYTMLGRAKQGKTERYRTFFSHFQAHPSEQLVHADGTPGMVMVVFTLPSYPLVFKLIRDRFAYPKTMSRAQVEGKYELVFQLDRIGRLLDAQPYRFLRFPKARFSPALLQELQTSCAMSLSEDGDDVLIALCYVQRRLRPLNLYLREQLPEAAHAAALDYGQAIKDMARNNIFPGDMLLKNFGITRHQRAVFYDYDELCLITECNFRDWPTPATYEEQMAAEPWFHVGPRDVFPERFALFMGLPSSQLEAVKHQHPELFDPRWWRDLQSRLRDDDYPDTPPYAESRRLA.

ATP is bound by residues 324 to 330 and K345; that span reads ADGTPGM. D380 is an active-site residue.

The protein belongs to the AceK family.

The protein localises to the cytoplasm. The enzyme catalyses L-seryl-[isocitrate dehydrogenase] + ATP = O-phospho-L-seryl-[isocitrate dehydrogenase] + ADP + H(+). In terms of biological role, bifunctional enzyme which can phosphorylate or dephosphorylate isocitrate dehydrogenase (IDH) on a specific serine residue. This is a regulatory mechanism which enables bacteria to bypass the Krebs cycle via the glyoxylate shunt in response to the source of carbon. When bacteria are grown on glucose, IDH is fully active and unphosphorylated, but when grown on acetate or ethanol, the activity of IDH declines drastically concomitant with its phosphorylation. This chain is Isocitrate dehydrogenase kinase/phosphatase, found in Xanthomonas axonopodis pv. citri (strain 306).